Consider the following 314-residue polypeptide: Deoxymugineic acid synthase 1-B (314 aa).

A disordered region spans residues 1–22; sequence MGAGDKTAAGMPRIGMGTAVQG. D44 contributes to the NADP(+) binding site. Residue Y49 is the Proton donor of the active site. H112 contacts substrate. Residues 158–159, Q180, 258–266, and 273–281 contribute to the NADP(+) site; these read AN, FDEARMREN, and ELTEEERRR.

The protein belongs to the aldo/keto reductase family. As to expression, mostly expressed in root tissues, observed in mesocotyl and embryonic roots, seedling roots, crown and seedling leafes, mature bracts, anthers, pistil, caryopsis and embryos.

The enzyme catalyses 2'-deoxymugineate + NAD(+) = 3''-deamino-3''-oxonicotianamine + NADH + H(+). It catalyses the reaction 2'-deoxymugineate + NADP(+) = 3''-deamino-3''-oxonicotianamine + NADPH + H(+). Its pathway is siderophore biosynthesis. Catalyzes the reduction of a 3''-keto intermediate during the biosynthesis of 2'-deoxymugineic acid (DMA) from L-Met. Involved in the formation of phytosiderophores (MAs) belonging to the mugineic acid family and required to acquire iron. The sequence is that of Deoxymugineic acid synthase 1-B from Triticum aestivum (Wheat).